A 292-amino-acid polypeptide reads, in one-letter code: Ribosomal RNA small subunit methyltransferase A (292 aa).

The S-adenosyl-L-methionine site is built by Asn28, Leu30, Gly55, Glu76, Asp101, and Asn126.

It belongs to the class I-like SAM-binding methyltransferase superfamily. rRNA adenine N(6)-methyltransferase family. RsmA subfamily.

It is found in the cytoplasm. It carries out the reaction adenosine(1518)/adenosine(1519) in 16S rRNA + 4 S-adenosyl-L-methionine = N(6)-dimethyladenosine(1518)/N(6)-dimethyladenosine(1519) in 16S rRNA + 4 S-adenosyl-L-homocysteine + 4 H(+). In terms of biological role, specifically dimethylates two adjacent adenosines (A1518 and A1519) in the loop of a conserved hairpin near the 3'-end of 16S rRNA in the 30S particle. May play a critical role in biogenesis of 30S subunits. The chain is Ribosomal RNA small subunit methyltransferase A from Bacillus mycoides (strain KBAB4) (Bacillus weihenstephanensis).